Here is a 179-residue protein sequence, read N- to C-terminus: ATP synthase subunit b (179 aa).

The chain crosses the membrane as a helical span at residues 23-43 (IVVGLVAFGLLAFVLMKFVFP).

The protein belongs to the ATPase B chain family. As to quaternary structure, F-type ATPases have 2 components, F(1) - the catalytic core - and F(0) - the membrane proton channel. F(1) has five subunits: alpha(3), beta(3), gamma(1), delta(1), epsilon(1). F(0) has three main subunits: a(1), b(2) and c(10-14). The alpha and beta chains form an alternating ring which encloses part of the gamma chain. F(1) is attached to F(0) by a central stalk formed by the gamma and epsilon chains, while a peripheral stalk is formed by the delta and b chains.

The protein resides in the cell membrane. In terms of biological role, f(1)F(0) ATP synthase produces ATP from ADP in the presence of a proton or sodium gradient. F-type ATPases consist of two structural domains, F(1) containing the extramembraneous catalytic core and F(0) containing the membrane proton channel, linked together by a central stalk and a peripheral stalk. During catalysis, ATP synthesis in the catalytic domain of F(1) is coupled via a rotary mechanism of the central stalk subunits to proton translocation. Component of the F(0) channel, it forms part of the peripheral stalk, linking F(1) to F(0). The sequence is that of ATP synthase subunit b from Salinispora arenicola (strain CNS-205).